The following is a 130-amino-acid chain: Small ribosomal subunit protein uS9 (130 aa).

It belongs to the universal ribosomal protein uS9 family.

The chain is Small ribosomal subunit protein uS9 from Serratia proteamaculans (strain 568).